Here is a 233-residue protein sequence, read N- to C-terminus: Lipoprotein-releasing system ATP-binding protein LolD (233 aa).

The 224-residue stretch at 10 to 233 (YRLEGVGKEY…AGELYDQHRP (224 aa)) folds into the ABC transporter domain. Position 46–53 (46–53 (GASGSGKS)) interacts with ATP.

This sequence belongs to the ABC transporter superfamily. Lipoprotein translocase (TC 3.A.1.125) family. As to quaternary structure, the complex is composed of two ATP-binding proteins (LolD) and two transmembrane proteins (LolC and LolE).

It localises to the cell inner membrane. In terms of biological role, part of the ABC transporter complex LolCDE involved in the translocation of mature outer membrane-directed lipoproteins, from the inner membrane to the periplasmic chaperone, LolA. Responsible for the formation of the LolA-lipoprotein complex in an ATP-dependent manner. In Nitratidesulfovibrio vulgaris (strain ATCC 29579 / DSM 644 / CCUG 34227 / NCIMB 8303 / VKM B-1760 / Hildenborough) (Desulfovibrio vulgaris), this protein is Lipoprotein-releasing system ATP-binding protein LolD.